The primary structure comprises 118 residues: Large ribosomal subunit protein bL19 (118 aa).

Belongs to the bacterial ribosomal protein bL19 family.

In terms of biological role, this protein is located at the 30S-50S ribosomal subunit interface and may play a role in the structure and function of the aminoacyl-tRNA binding site. This chain is Large ribosomal subunit protein bL19, found in Dictyoglomus thermophilum (strain ATCC 35947 / DSM 3960 / H-6-12).